Here is a 370-residue protein sequence, read N- to C-terminus: Cytoplasmic envelopment protein 2 (370 aa).

The protein belongs to the herpesviridae cytoplasmic envelopment protein 2 family. As to quaternary structure, interacts with cytoplasmic envelopment protein 3 and with the capsid.

It is found in the virion tegument. Its subcellular location is the host cytoplasm. The protein resides in the host nucleus. Functionally, plays a critical role in cytoplasmic virus egress. Participates in the final step of tegumentation and envelope acquisition within the host cytoplasm by directly interacting with the capsid. Upon virion binding to target cell, a signaling cascade is triggered to disrupt the interaction with the capsid, thereby preparing capsid uncoating. The sequence is that of Cytoplasmic envelopment protein 2 from Equine herpesvirus 1 (strain V592) (EHV-1).